A 181-amino-acid chain; its full sequence is Anthrone oxygenase encC (181 aa).

Transmembrane regions (helical) follow at residues 1–21 (MASVQGLIKIVAITGGVWLSG), 65–81 (QIAACTSTAFAYLAWCA), 88–108 (LLYGTAACSVMGIVPYTLLFM), and 153–173 (FLAGIRGLLPLAGGILGLFAA).

This sequence belongs to the anthrone oxygenase family. Endocrocin is specifically produced in conidia.

The protein resides in the membrane. Anthrone oxygenase; part of the gene cluster that mediates the biosynthesis of endocrocin, a simple anthraquinone interesting for many biotechnological applications. The pathway begins with the synthesis of atrochrysone thioester by the polyketide synthase (PKS) encA. The atrochrysone carboxyl ACP thioesterase encB then breaks the thioester bond and releases the atrochrysone carboxylic acid from encA. The atrochrysone carboxylic acid is then converted to endocrocin anthrone which is further oxidized into endocrocin by the anthrone oxygenase encC. The exact function of encD has not been identified yet, but it negatively regulates endocrocin production, likely through the modification of endocrocin itself. In Aspergillus fumigatus (strain ATCC MYA-4609 / CBS 101355 / FGSC A1100 / Af293) (Neosartorya fumigata), this protein is Anthrone oxygenase encC.